The primary structure comprises 286 residues: Aquaporin PIP2-4 (286 aa).

2 consecutive transmembrane segments (helical) span residues 40–60 (ALIAEFVATLLFLYVTVATVI) and 77–97 (CGGVGVLGIAWAFGGMIFILV). Positions 109–111 (NPA) match the NPA 1 motif. The next 3 membrane-spanning stretches (helical) occupy residues 128-148 (LLYMAAQCLGAICGVALVKGF), 170-190 (GTGLAAEIIGTFVLVYTVFSA), and 204-224 (VLAPLPIGFAVFMVHLATIPI). Positions 230–232 (NPA) match the NPA 2 motif. A helical membrane pass occupies residues 252-272 (IFWVGPFIGAAIAALYHQVIL).

This sequence belongs to the MIP/aquaporin (TC 1.A.8) family. PIP (TC 1.A.8.11) subfamily. As to expression, expressed in roots.

The protein resides in the cell membrane. In terms of biological role, water channel required to facilitate the transport of water across cell membrane. May play a role in root water uptake. The sequence is that of Aquaporin PIP2-4 (PIP2-4) from Oryza sativa subsp. japonica (Rice).